The chain runs to 576 residues: Citrinin biosynthesis transcriptional activator ctnR (576 aa).

Residues 1–27 (MLSHEMASTAHRQPSRPTTRQRQRTGR) form a disordered region. A DNA-binding region (zn(2)-C6 fungal-type) is located at residues 29-56 (CEECRRRKLRCDGQQPRCGVCVDSGVTC). Positions 102 to 148 (STPLTNDHHDGCSVSSASSRSDSNPPPTVSEPDMSLPNTTTSVSSAP) are disordered. A compositionally biased stretch (low complexity) spans 114–124 (SVSSASSRSDS). The segment covering 137–148 (LPNTTTSVSSAP) has biased composition (polar residues).

It is found in the nucleus. Functionally, transcription factor that regulates the expression of the gene cluster that mediates the biosynthesis of the mycotoxin citrinin, a hepato-nephrotoxic compound to humans due to inhibition of respiration complex III. This Monascus purpureus (Red mold) protein is Citrinin biosynthesis transcriptional activator ctnR.